We begin with the raw amino-acid sequence, 478 residues long: Proline--tRNA ligase (478 aa).

It belongs to the class-II aminoacyl-tRNA synthetase family. ProS type 3 subfamily. In terms of assembly, homodimer.

It localises to the cytoplasm. The catalysed reaction is tRNA(Pro) + L-proline + ATP = L-prolyl-tRNA(Pro) + AMP + diphosphate. Catalyzes the attachment of proline to tRNA(Pro) in a two-step reaction: proline is first activated by ATP to form Pro-AMP and then transferred to the acceptor end of tRNA(Pro). The sequence is that of Proline--tRNA ligase from Methanococcoides burtonii (strain DSM 6242 / NBRC 107633 / OCM 468 / ACE-M).